The chain runs to 493 residues: ATP-dependent RNA helicase dbp3 (493 aa).

The tract at residues 1–38 (MTKRDYQNDTTAESRPTKKSKGEKKVKETKEKKEKKVK) is disordered. A compositionally biased stretch (basic and acidic residues) spans 23–34 (EKKVKETKEKKE). Residues 97–105 (SFKSPTSIQ) carry the Q motif motif. The region spanning 109-285 (WPLLFGGRDV…STFMSSPVTV (177 aa)) is the Helicase ATP-binding domain. 122–129 (AETGSGKT) is an ATP binding site. Residues 232–235 (DEAD) carry the DEAD box motif. The 147-residue stretch at 316–462 (RLVQLLKQHQ…EVPEELLKFG (147 aa)) folds into the Helicase C-terminal domain.

The protein belongs to the DEAD box helicase family. DDX5/DBP2 subfamily.

Its subcellular location is the nucleus. The protein resides in the nucleolus. The enzyme catalyses ATP + H2O = ADP + phosphate + H(+). In terms of biological role, ATP-dependent RNA helicase required for 60S ribosomal subunit synthesis. Involved in efficient pre-rRNA processing, predominantly at site A3, which is necessary for the normal formation of 25S and 5.8S rRNAs. This is ATP-dependent RNA helicase dbp3 (dbp3) from Aspergillus terreus (strain NIH 2624 / FGSC A1156).